Consider the following 315-residue polypeptide: Methionyl-tRNA formyltransferase (315 aa).

A (6S)-5,6,7,8-tetrahydrofolate-binding site is contributed by 113-116 (SILP).

The protein belongs to the Fmt family.

The catalysed reaction is L-methionyl-tRNA(fMet) + (6R)-10-formyltetrahydrofolate = N-formyl-L-methionyl-tRNA(fMet) + (6S)-5,6,7,8-tetrahydrofolate + H(+). Its function is as follows. Attaches a formyl group to the free amino group of methionyl-tRNA(fMet). The formyl group appears to play a dual role in the initiator identity of N-formylmethionyl-tRNA by promoting its recognition by IF2 and preventing the misappropriation of this tRNA by the elongation apparatus. This is Methionyl-tRNA formyltransferase from Vibrio parahaemolyticus serotype O3:K6 (strain RIMD 2210633).